We begin with the raw amino-acid sequence, 299 residues long: Tetrahydromethanopterin S-methyltransferase subunit E (299 aa).

6 consecutive transmembrane segments (helical) span residues A57–L79, A89–G111, H132–A154, L164–G183, F227–L246, and L261–N283.

It belongs to the MtrE family. In terms of assembly, the complex is composed of 8 subunits; MtrA, MtrB, MtrC, MtrD, MtrE, MtrF, MtrG and MtrH.

It is found in the cell membrane. It carries out the reaction 5-methyl-5,6,7,8-tetrahydromethanopterin + coenzyme M + 2 Na(+)(in) = 5,6,7,8-tetrahydromethanopterin + methyl-coenzyme M + 2 Na(+)(out). The protein operates within one-carbon metabolism; methanogenesis from CO(2); methyl-coenzyme M from 5,10-methylene-5,6,7,8-tetrahydromethanopterin: step 2/2. Functionally, part of a complex that catalyzes the formation of methyl-coenzyme M and tetrahydromethanopterin from coenzyme M and methyl-tetrahydromethanopterin. This is an energy-conserving, sodium-ion translocating step. The polypeptide is Tetrahydromethanopterin S-methyltransferase subunit E (Methanococcus maripaludis (strain DSM 14266 / JCM 13030 / NBRC 101832 / S2 / LL)).